The following is a 318-amino-acid chain: Protein FAM228A (318 aa).

A disordered region spans residues 259 to 297 (SQESKRHEKKGLALGTGQHRPRSWAAGEGQQRRRSQPVD).

This sequence belongs to the FAM228 family.

In Bos taurus (Bovine), this protein is Protein FAM228A (FAM228A).